Consider the following 706-residue polypeptide: MTIIIAGKNTLTLTSLAAAVLALGACGGNSDPFESKNTKPAYLGAVAIASYDGASDDLLTAGLGKTGLGGTAPAVADPLKPTPAELRRLAIFNNYRAILDISTNGGYGTLYGPNVDAKGVITTGEGKIAGTEYIAYSDDGTGRQNITMMVQVPASFNPANACIVTGTSSGSRGVYGAIGSAGEWGLKNGCAVAYTDKGTGTGIHDLQNNTVNVQNGVRTDAAAAGKNSIFTAELSASERAAFNAATPNRFAVKHAHSQQNPEKDWGKWTLQSVEFAYFVLNEKYGDLARDGATHLKKLTPSNTIVIASSVSNGAGAALAAAEQDTQGLISGVAVAEPEVQLAPDARLSVKRGASVLVGTGKPLYDYFTLANLLQPCAALVSPATNAFNTVNAATATNRCSALKANGLVTGTTTAEQAASALAALVAAGWQPESNVLQASHYSFATLSVGLTYANTYGRFSVKDNLCGFSFAATGAAASATPNAPVPASASALATSFGASNGVPPTIGINIVNNLSAGGPLLDAASLSAGGVQDYNIAGALCMRELATGSSANAVRVRQGMSEVVRSANLRGKPALIVQGRADTLLPVAFTGRPYYGMNKIVEGTASRLSYIEVTNAQHFDAFLAFPGYPERMVPLHRYFIQAMDMMYANLKTGAALPASQVVRTVPRGLTGAVANPIAASNVPPIKTTPAAADQITFANNVVTIAD.

The first 27 residues, 1 to 27 (MTIIIAGKNTLTLTSLAAAVLALGACG), serve as a signal peptide directing secretion. Serine 311 acts as the Charge relay system in catalysis.

The protein belongs to the D-(-)-3-hydroxybutyrate oligomer hydrolase family.

It localises to the secreted. The catalysed reaction is (3R)-hydroxybutanoate dimer + H2O = 2 (R)-3-hydroxybutanoate + H(+). Its pathway is lipid metabolism; butanoate metabolism. Participates in the degradation of poly-3-hydroxybutyrate (PHB). It works downstream of poly(3-hydroxybutyrate) depolymerase, hydrolyzing D(-)-3-hydroxybutyrate oligomers of various length (3HB-oligomers) into 3HB-monomers. The sequence is that of D-(-)-3-hydroxybutyrate oligomer hydrolase from Polaromonas naphthalenivorans (strain CJ2).